The chain runs to 223 residues: Kynurenine formamidase (223 aa).

Residue Phe-34 coordinates substrate. 3 residues coordinate Zn(2+): His-64, His-68, and Asp-70. Catalysis depends on His-74, which acts as the Proton donor/acceptor. Residues His-174 and Glu-186 each coordinate Zn(2+).

It belongs to the Cyclase 1 superfamily. KynB family. In terms of assembly, homodimer. Zn(2+) is required as a cofactor.

The catalysed reaction is N-formyl-L-kynurenine + H2O = L-kynurenine + formate + H(+). The protein operates within amino-acid degradation; L-tryptophan degradation via kynurenine pathway; L-kynurenine from L-tryptophan: step 2/2. Catalyzes the hydrolysis of N-formyl-L-kynurenine to L-kynurenine, the second step in the kynurenine pathway of tryptophan degradation. The chain is Kynurenine formamidase from Polaromonas naphthalenivorans (strain CJ2).